Consider the following 90-residue polypeptide: MKAGIHPDYRTVLFHDTAADVFFLIGSTADSDRTHVHSDGNTYPYIPLDVSSASHPIYTGQQRKTQVEGRIAGFNKRFASFGSGAKKAEE.

Belongs to the bacterial ribosomal protein bL31 family. Type B subfamily. In terms of assembly, part of the 50S ribosomal subunit.

This Pseudomonas fluorescens (strain SBW25) protein is Large ribosomal subunit protein bL31B.